A 640-amino-acid chain; its full sequence is MCGICCAVSFSVEHFSRDLKEDLLCNLKRRGPDSSKQLLRSTVNYQCLFSGHVLHLRGLLTAQPVEDERGNVFLWNGEIFSGIKVEAEENDTQIMFHYLSSCKNESDILSLFSKVQGPWSFIYYQASSHSLWFGRDFFGRRSLLWHFSNLGKSFCLSSVGTQASGVTDQWQEVPASGIFRIDLKSASISQSVVLKLYPWKYSSGGDDIRECVHNSLTEISADLPTFVLVAANEAKLYLKDPVVPLNMALPQAAFETHCSSISRSPLTRETLRVFLTDGHTKEVVQQFIGVLSTAVKRRVLCLPRDENLAPSEVLKTSNRKANVAVLFSGGIDSMVIAALADHHIPLDEPIDLLNVAFMTKEKTIPVNFNKKGRKQANHCEMPSEEFSKHAAATAAASPGEQLSVPDRVTGRAGLKELQAANPSRIWNFVEINVSLEELQRLRRTRISHLIQPLDTVLDDSIGCAVWFASRGAGWLVTQDGAQPYQSSAKVVLTGIGADEQLAGYSRHQVRFLAHGLEGLNKEIEMELGRISSRNLGRDDRVISDHGKEARFPFLDENVVSFLNSLPVWEKANLTLPRGIGEKLILRLAAVELGLTASALLPKRAMQFGSRIAKMEKNNEKASDKCGRLQIISLENLSVEN.

Cys-2 acts as the For GATase activity in catalysis. Residues 2–184 (CGICCAVSFS…ASGIFRIDLK (183 aa)) form the Glutamine amidotransferase type-2 domain. Residues 286-602 (QFIGVLSTAV…GLTASALLPK (317 aa)) form the Asparagine synthetase domain.

The protein is Asparagine synthetase domain-containing protein 1 (ASNSD1) of Bos taurus (Bovine).